A 94-amino-acid polypeptide reads, in one-letter code: PTS system galactitol-specific EIIB component (94 aa).

Positions 1–94 (MKRKIIVACG…QNKILTILQG (94 aa)) constitute a PTS EIIB type-2 domain. C9 functions as the Phosphocysteine intermediate; for EIIB activity in the catalytic mechanism. C9 is subject to Phosphocysteine; by EIIA.

Forms a complex with one each of subunit of GatA, GatB and 2 subunits of GatC.

The protein resides in the cytoplasm. The enzyme catalyses galactitol(out) + N(pros)-phospho-L-histidyl-[protein] = galactitol 1-phosphate(in) + L-histidyl-[protein]. In terms of biological role, the phosphoenolpyruvate-dependent sugar phosphotransferase system (PTS), a major carbohydrate active transport system, catalyzes the phosphorylation of incoming sugar substrates concomitant with their translocation across the cell membrane. The enzyme II complex composed of GatA, GatB and GatC is involved in galactitol transport. This chain is PTS system galactitol-specific EIIB component (gatB), found in Escherichia coli O157:H7.